Here is a 448-residue protein sequence, read N- to C-terminus: Exoglucanase GH7B (448 aa).

The first 17 residues, 1–17 (MSLAVVFLLGFLAVSHG), serve as a signal peptide directing secretion. Pyrrolidone carboxylic acid is present on Q18. 2 disulfide bridges follow: C62–C83 and C73–C79. Substrate is bound by residues Y97, 119-120 (DI), and K197. Cystine bridges form between C154/C415, C188/C226, C192/C225, C246/C271, C254/C259, and C276/C350. E228 (nucleophile) is an active-site residue. Residues 230 to 233 (DIWE) and H244 each bind substrate. E233 acts as the Proton donor/acceptor in catalysis. The substrate site is built by R266 and D274. Substrate is bound by residues W396 and R412.

Belongs to the glycosyl hydrolase 7 (cellulase C) family. Monomer. Highly expressed in the hepatopancreas (at protein level). Little or no expression detected in the hindgut or the rest of the body (at protein level).

Its subcellular location is the secreted. The catalysed reaction is Hydrolysis of (1-&gt;4)-beta-D-glucosidic linkages in cellulose and cellotetraose, releasing cellobiose from the non-reducing ends of the chains.. Its function is as follows. Exocellobiohydrolase (CBH) that catalyzes the hydrolysis of 1,4-beta-D-glucosidic bonds in cellulose to release the disaccharide cellobiose. The degradation of cellulose involves an interplay between different cellulolytic enzymes. Hydrolysis starts with endoglucanases (EGs), which cut internal beta-1,4-glucosidic bonds in cellulose to reduce the polymerization degree of the substrate and create new chain ends for exocellobiohydrolases (CBHs). The CBHs release the disaccharide cellobiose from the non-reducing end of the cellulose polymer chain. Finally, beta-1,4-glucosidases hydrolyze the cellobiose and other short cello-oligosaccharides into glucose units. The chain is Exoglucanase GH7B from Limnoria quadripunctata (Gribble).